We begin with the raw amino-acid sequence, 379 residues long: Dual-specificity RNA methyltransferase RlmN (379 aa).

The Proton acceptor role is filled by Glu95. Residues 101 to 345 (EETRGTLCVS…TTVRKTRGDD (245 aa)) form the Radical SAM core domain. Residues Cys108 and Cys350 are joined by a disulfide bond. [4Fe-4S] cluster is bound by residues Cys115, Cys119, and Cys122. S-adenosyl-L-methionine contacts are provided by residues 176–177 (GE), Ser208, 230–232 (SLH), and Asn307. Cys350 acts as the S-methylcysteine intermediate in catalysis.

It belongs to the radical SAM superfamily. RlmN family. [4Fe-4S] cluster serves as cofactor.

It is found in the cytoplasm. It carries out the reaction adenosine(2503) in 23S rRNA + 2 reduced [2Fe-2S]-[ferredoxin] + 2 S-adenosyl-L-methionine = 2-methyladenosine(2503) in 23S rRNA + 5'-deoxyadenosine + L-methionine + 2 oxidized [2Fe-2S]-[ferredoxin] + S-adenosyl-L-homocysteine. It catalyses the reaction adenosine(37) in tRNA + 2 reduced [2Fe-2S]-[ferredoxin] + 2 S-adenosyl-L-methionine = 2-methyladenosine(37) in tRNA + 5'-deoxyadenosine + L-methionine + 2 oxidized [2Fe-2S]-[ferredoxin] + S-adenosyl-L-homocysteine. Its function is as follows. Specifically methylates position 2 of adenine 2503 in 23S rRNA and position 2 of adenine 37 in tRNAs. m2A2503 modification seems to play a crucial role in the proofreading step occurring at the peptidyl transferase center and thus would serve to optimize ribosomal fidelity. The polypeptide is Dual-specificity RNA methyltransferase RlmN (Burkholderia vietnamiensis (strain G4 / LMG 22486) (Burkholderia cepacia (strain R1808))).